A 76-amino-acid chain; its full sequence is MLAKHKLARINELAKKAKTAGLSAEEAFEQAKLRREYIQAFRKAMTDMLHTVTVIDPSGNDVTPKKLKESQRRRFH.

Residues 57–76 form a disordered region; that stretch reads PSGNDVTPKKLKESQRRRFH. Positions 63–76 are enriched in basic and acidic residues; it reads TPKKLKESQRRRFH.

The protein belongs to the UPF0291 family.

It is found in the cytoplasm. This is UPF0291 protein GK1331 from Geobacillus kaustophilus (strain HTA426).